Reading from the N-terminus, the 780-residue chain is Protein SAV (780 aa).

ATP is bound by residues Gly253–Thr260 and Gly528–Thr535.

Belongs to the AAA ATPase family. CDC48 subfamily.

Functionally, not yet known, shows ATPase activity. The chain is Protein SAV (sav) from Sulfolobus acidocaldarius (strain ATCC 33909 / DSM 639 / JCM 8929 / NBRC 15157 / NCIMB 11770).